We begin with the raw amino-acid sequence, 326 residues long: tRNA-modifying protein YgfZ (326 aa).

W27 and W189 together coordinate folate.

Belongs to the tRNA-modifying YgfZ family.

The protein localises to the cytoplasm. In terms of biological role, folate-binding protein involved in regulating the level of ATP-DnaA and in the modification of some tRNAs. It is probably a key factor in regulatory networks that act via tRNA modification, such as initiation of chromosomal replication. The polypeptide is tRNA-modifying protein YgfZ (Salmonella paratyphi A (strain AKU_12601)).